Reading from the N-terminus, the 125-residue chain is Profilin-P (125 aa).

S2 is subject to N-acetylserine.

Belongs to the profilin family. In terms of assembly, occurs in many kinds of cells as a complex with monomeric actin in a 1:1 ratio.

The protein resides in the cytoplasm. The protein localises to the cytoskeleton. Binds to actin and affects the structure of the cytoskeleton. At high concentrations, profilin prevents the polymerization of actin, whereas it enhances it at low concentrations. By binding to PIP2, it inhibits the formation of IP3 and DG. This chain is Profilin-P (PROP), found in Physarum polycephalum (Slime mold).